Here is a 1407-residue protein sequence, read N- to C-terminus: ABC transporter B family member 6 (1407 aa).

Residues 18 to 65 (LTPVSEVSEPPESPSPYLDPGAEHGGTGTAAQADDEEEMEEPEEMEPP) are disordered. The segment covering 50–63 (ADDEEEMEEPEEME) has biased composition (acidic residues). A run of 4 helical transmembrane segments spans residues 84–104 (VLMV…IVYL), 139–159 (IVYI…CWIL), 212–231 (VGNY…IGFV), and 236–258 (IALI…NIFL). One can recognise an ABC transmembrane type-1 1 domain in the interval 86-379 (MVFGSVAAAA…AATNFYSFDQ (294 aa)). The N-linked (GlcNAc...) asparagine glycan is linked to asparagine 291. 2 consecutive transmembrane segments (helical) span residues 310 to 330 (GILI…LAIC) and 351 to 371 (GEII…NQAA). An ABC transporter 1 domain is found at 412-647 (IEFRNVYFSY…GNLYAELLKC (236 aa)). Position 447-454 (447-454 (GRNGSGKS)) interacts with ATP. 2 N-linked (GlcNAc...) asparagine glycosylation sites follow: asparagine 449 and asparagine 663. Disordered regions lie at residues 670-696 (AERD…SLQR) and 709-815 (NSEE…DGQH). Asparagine 727 carries an N-linked (GlcNAc...) asparagine glycan. Positions 733–755 (VGEKEPTIKRQDSFEMRLPELPK) are enriched in basic and acidic residues. The span at 761–770 (PQRQKSNGSD) shows a compositional bias: polar residues. Asparagine 767 carries an N-linked (GlcNAc...) asparagine glycan. Residues 835–1123 (AVLGSIGAAI…PFGLAPYILK (289 aa)) form the ABC transmembrane type-1 2 domain. Transmembrane regions (helical) follow at residues 840–860 (IGAA…ALVV), 880–900 (LIIA…HFYF), 958–978 (IFIQ…LLGW), 982–1002 (LVAL…KLWL), 1061–1081 (IGFA…LLLW), and 1102–1122 (MVFS…PYIL). Residues 1158–1395 (IELKNIDFCY…NGLYVRLMQP (238 aa)) enclose the ABC transporter 2 domain. Asparagine 1178 is a glycosylation site (N-linked (GlcNAc...) asparagine). Position 1193–1200 (1193–1200 (GVSGSGKS)) interacts with ATP. N-linked (GlcNAc...) asparagine glycosylation is found at asparagine 1260 and asparagine 1346.

This sequence belongs to the ABC transporter superfamily. ABCB family. Multidrug resistance exporter (TC 3.A.1.201) subfamily. Expressed in aerial tissues.

The protein resides in the membrane. The catalysed reaction is (indol-3-yl)acetate(in) + ATP + H2O = (indol-3-yl)acetate(out) + ADP + phosphate + H(+). Probable auxin efflux transporter that contributes, together with ABCB20 and in a FKBP42/TWD1-dependent manner, to the regulation of leaf position and morphology, internode distribution, roots development, and inflorescence organization, probably by modulating auxin repartition. The sequence is that of ABC transporter B family member 6 from Arabidopsis thaliana (Mouse-ear cress).